The sequence spans 195 residues: Imidazoleglycerol-phosphate dehydratase (195 aa).

Belongs to the imidazoleglycerol-phosphate dehydratase family.

Its subcellular location is the cytoplasm. The catalysed reaction is D-erythro-1-(imidazol-4-yl)glycerol 3-phosphate = 3-(imidazol-4-yl)-2-oxopropyl phosphate + H2O. It participates in amino-acid biosynthesis; L-histidine biosynthesis; L-histidine from 5-phospho-alpha-D-ribose 1-diphosphate: step 6/9. In Geobacillus sp. (strain WCH70), this protein is Imidazoleglycerol-phosphate dehydratase.